The primary structure comprises 230 residues: 2,3-bisphosphoglycerate-dependent phosphoglycerate mutase (230 aa).

Residues 8 to 15 (RHGESEWN), 21 to 22 (TG), Arg-60, 87 to 90 (ERHY), Lys-98, 114 to 115 (RR), and 183 to 184 (GN) contribute to the substrate site. Residue His-9 is the Tele-phosphohistidine intermediate of the active site. The Proton donor/acceptor role is filled by Glu-87.

The protein belongs to the phosphoglycerate mutase family. BPG-dependent PGAM subfamily.

The enzyme catalyses (2R)-2-phosphoglycerate = (2R)-3-phosphoglycerate. The protein operates within carbohydrate degradation; glycolysis; pyruvate from D-glyceraldehyde 3-phosphate: step 3/5. Its function is as follows. Catalyzes the interconversion of 2-phosphoglycerate and 3-phosphoglycerate. The chain is 2,3-bisphosphoglycerate-dependent phosphoglycerate mutase from Streptococcus uberis (strain ATCC BAA-854 / 0140J).